The following is a 250-amino-acid chain: Glycerol-1-phosphate phosphohydrolase 1 (250 aa).

The active-site Nucleophile is D18. The Mg(2+) site is built by D18 and D20. D20 acts as the Proton donor in catalysis. Residue K64 forms a Glycyl lysine isopeptide (Lys-Gly) (interchain with G-Cter in SUMO); alternate linkage. K64 participates in a covalent cross-link: Glycyl lysine isopeptide (Lys-Gly) (interchain with G-Cter in ubiquitin); alternate. S90 bears the Phosphoserine mark. K144 is covalently cross-linked (Glycyl lysine isopeptide (Lys-Gly) (interchain with G-Cter in ubiquitin)). Residue D179 coordinates Mg(2+).

The protein belongs to the HAD-like hydrolase superfamily. DOG/GPP family. Monomer. The cofactor is Mg(2+).

It is found in the cytoplasm. It localises to the nucleus. It carries out the reaction sn-glycerol 1-phosphate + H2O = glycerol + phosphate. The enzyme catalyses sn-glycerol 3-phosphate + H2O = glycerol + phosphate. In terms of biological role, major isoform of glycerol-1-phosphate phosphohydrolase involved in glycerol biosynthesis. Plays a role in osmoadaptation and required for adaptation to anaerobic conditions. The chain is Glycerol-1-phosphate phosphohydrolase 1 from Saccharomyces cerevisiae (strain ATCC 204508 / S288c) (Baker's yeast).